The primary structure comprises 102 residues: Urease subunit beta (102 aa).

The protein belongs to the urease beta subunit family. Heterotrimer of UreA (gamma), UreB (beta) and UreC (alpha) subunits. Three heterotrimers associate to form the active enzyme.

It is found in the cytoplasm. It catalyses the reaction urea + 2 H2O + H(+) = hydrogencarbonate + 2 NH4(+). The protein operates within nitrogen metabolism; urea degradation; CO(2) and NH(3) from urea (urease route): step 1/1. The polypeptide is Urease subunit beta (Opitutus terrae (strain DSM 11246 / JCM 15787 / PB90-1)).